The chain runs to 197 residues: Probable molybdenum cofactor guanylyltransferase (197 aa).

GTP contacts are provided by residues 12–14 (LAG), Lys-24, Asp-71, and Asp-103. Asp-103 contacts Mg(2+).

Belongs to the MobA family. Mg(2+) is required as a cofactor.

It localises to the cytoplasm. The catalysed reaction is Mo-molybdopterin + GTP + H(+) = Mo-molybdopterin guanine dinucleotide + diphosphate. Functionally, transfers a GMP moiety from GTP to Mo-molybdopterin (Mo-MPT) cofactor (Moco or molybdenum cofactor) to form Mo-molybdopterin guanine dinucleotide (Mo-MGD) cofactor. The polypeptide is Probable molybdenum cofactor guanylyltransferase (Mycolicibacterium paratuberculosis (strain ATCC BAA-968 / K-10) (Mycobacterium paratuberculosis)).